Here is a 189-residue protein sequence, read N- to C-terminus: Protein GrpE (189 aa).

The interval methionine 1–glutamate 37 is disordered. Residues serine 17–aspartate 33 show a composition bias toward basic and acidic residues.

The protein belongs to the GrpE family. In terms of assembly, homodimer.

Its subcellular location is the cytoplasm. Functionally, participates actively in the response to hyperosmotic and heat shock by preventing the aggregation of stress-denatured proteins, in association with DnaK and GrpE. It is the nucleotide exchange factor for DnaK and may function as a thermosensor. Unfolded proteins bind initially to DnaJ; upon interaction with the DnaJ-bound protein, DnaK hydrolyzes its bound ATP, resulting in the formation of a stable complex. GrpE releases ADP from DnaK; ATP binding to DnaK triggers the release of the substrate protein, thus completing the reaction cycle. Several rounds of ATP-dependent interactions between DnaJ, DnaK and GrpE are required for fully efficient folding. The polypeptide is Protein GrpE (Wolbachia pipientis wMel).